A 235-amino-acid chain; its full sequence is Transmembrane emp24 domain-containing protein 9 (235 aa).

Positions 1–37 (MAAERSLWVVGLCPGSRLGRVVRVLLLLLWFAARGGA) are cleaved as a signal peptide. Residues 38-201 (LYFHIGETEK…FRQTSESTNQ (164 aa)) are Lumenal-facing. The region spanning 47-145 (KKCFIEEIPD…MLRVHLDIQV (99 aa)) is the GOLD domain. Residues 121 to 160 (CLHSNSTKFSLFAGGMLRVHLDIQVGEHANDYAEIAAKDK) are required for interaction with STX17. N-linked (GlcNAc...) asparagine glycosylation occurs at asparagine 125. Residues 154–184 (EIAAKDKLSELQLRVRQLVEQVEQIQKEQNY) adopt a coiled-coil conformation. An N6-acetyllysine modification is found at lysine 160. Residues 202 to 222 (RVLWWSILQTLILVAIGVWQM) traverse the membrane as a helical segment. The Cytoplasmic segment spans residues 223–235 (RHLKSFFEAKKLV). The short motif at 228–229 (FF) is the COPII vesicle coat-binding element. Positions 228–235 (FFEAKKLV) match the COPI vesicle coat-binding motif.

Belongs to the EMP24/GP25L family. Monomer and homodimer in endoplasmic reticulum. Predominantly monomeric and to lesser extent homodimeric in endoplasmic reticulum-Golgi intermediate compartment and cis-Golgi network. Probably oligomerizes with other members of the EMP24/GP25L family such as TMED2, TMED7 and TMED10. Interacts with TMED5. Interacts (via C-terminus) with COPG1; the interaction involves dimeric TMED9. Interacts with PTPN2 and SPAST. Interacts with STX17; the interaction is direct. N-linked glycosylated containing high mannose.

The protein localises to the endoplasmic reticulum membrane. It localises to the golgi apparatus. It is found in the cis-Golgi network membrane. The protein resides in the endoplasmic reticulum-Golgi intermediate compartment membrane. Its subcellular location is the trans-Golgi network membrane. In terms of biological role, appears to be involved in vesicular protein trafficking, mainly in the early secretory pathway. In COPI vesicle-mediated retrograde transport involved in the coatomer recruitment to membranes of the early secretory pathway. Increases coatomer-dependent activity of ARFGAP2. Thought to play a crucial role in the specific retention of p24 complexes in cis-Golgi membranes; specifically contributes to the coupled localization of TMED2 and TMED10 in the cis-Golgi network. May be involved in organization of intracellular membranes, such as of the ER-Golgi intermediate compartment and the Golgi apparatus. Involved in ER localization of PTPN2. The chain is Transmembrane emp24 domain-containing protein 9 (TMED9) from Bos taurus (Bovine).